Consider the following 719-residue polypeptide: Penicillin-binding protein 1A (719 aa).

The transglycosylase stretch occupies residues 62–223 (LIADLGSERR…NQYDPYSHPE (162 aa)). Glutamate 91 (proton donor; for transglycosylase activity) is an active-site residue. A transpeptidase region spans residues 297–611 (DVYTNVDQEA…RLTPLVGNGL (315 aa)). Serine 370 serves as the catalytic Acyl-ester intermediate; for transpeptidase activity. Positions 652 to 719 (ARSTWSSPAP…QNQNPQPAQP (68 aa)) are disordered. Positions 654 to 719 (STWSSPAPQQ…QNQNPQPAQP (66 aa)) are enriched in low complexity.

In the N-terminal section; belongs to the glycosyltransferase 51 family. The protein in the C-terminal section; belongs to the transpeptidase family. As to quaternary structure, interacts with MreC in the elongasome.

It localises to the secreted. It catalyses the reaction [GlcNAc-(1-&gt;4)-Mur2Ac(oyl-L-Ala-gamma-D-Glu-L-Lys-D-Ala-D-Ala)](n)-di-trans,octa-cis-undecaprenyl diphosphate + beta-D-GlcNAc-(1-&gt;4)-Mur2Ac(oyl-L-Ala-gamma-D-Glu-L-Lys-D-Ala-D-Ala)-di-trans,octa-cis-undecaprenyl diphosphate = [GlcNAc-(1-&gt;4)-Mur2Ac(oyl-L-Ala-gamma-D-Glu-L-Lys-D-Ala-D-Ala)](n+1)-di-trans,octa-cis-undecaprenyl diphosphate + di-trans,octa-cis-undecaprenyl diphosphate + H(+). It carries out the reaction Preferential cleavage: (Ac)2-L-Lys-D-Ala-|-D-Ala. Also transpeptidation of peptidyl-alanyl moieties that are N-acyl substituents of D-alanine.. Its pathway is cell wall biogenesis; peptidoglycan biosynthesis. Functionally, cell wall formation. This chain is Penicillin-binding protein 1A (pbpA), found in Streptococcus pneumoniae (strain ATCC BAA-255 / R6).